The chain runs to 84 residues: Large ribosomal subunit protein bL27 (84 aa).

The segment at 1–21 (MAHKKGQGSTRNGRDSHSKRL) is disordered. Residues 12 to 21 (NGRDSHSKRL) show a composition bias toward basic and acidic residues.

Belongs to the bacterial ribosomal protein bL27 family.

The polypeptide is Large ribosomal subunit protein bL27 (Methylacidiphilum infernorum (isolate V4) (Methylokorus infernorum (strain V4))).